We begin with the raw amino-acid sequence, 398 residues long: L-methionine gamma-lyase (398 aa).

Pyridoxal 5'-phosphate contacts are provided by residues 59 to 61 (YSR) and 89 to 90 (GM). Position 114 (Tyr-114) interacts with substrate. Position 208–210 (208–210 (SAT)) interacts with pyridoxal 5'-phosphate. Lys-211 carries the post-translational modification N6-(pyridoxal phosphate)lysine. A substrate-binding site is contributed by Arg-375.

The protein belongs to the trans-sulfuration enzymes family. L-methionine gamma-lyase subfamily. As to quaternary structure, homotetramer; dimer of active dimers. Pyridoxal 5'-phosphate serves as cofactor.

The catalysed reaction is L-methionine + H2O = methanethiol + 2-oxobutanoate + NH4(+). It catalyses the reaction L-homocysteine + H2O = 2-oxobutanoate + hydrogen sulfide + NH4(+) + H(+). Its activity is regulated as follows. Irreversibly inactivated by DL-propargylglycine. Its function is as follows. Catalyzes the alpha,gamma-elimination of L-methionine to produce methanethiol, 2-oxobutanoate and ammonia. Is involved in L-methionine catabolism. In fact, shows a multicatalytic function since it also catalyzes gamma-replacement of L-methionine with thiol compounds, alpha,gamma-elimination and gamma-replacement reactions of L-homocysteine and its S-substituted derivatives, O-substituted-L-homoserines and DL-selenomethionine, and, to a lesser extent, alpha,beta-elimination and beta-replacement reactions of L-cysteine, S-methyl-L-cysteine, and O-acetyl-L-serine. Also catalyzes deamination and gamma-addition reactions of L-vinylglycine. Thus, the enzyme is able to cleave C-S, C-Se, and C-O bonds of sulfur, selenium, and oxygen amino acids, respectively. The sequence is that of L-methionine gamma-lyase from Pseudomonas putida (Arthrobacter siderocapsulatus).